Reading from the N-terminus, the 1032-residue chain is Connector enhancer of kinase suppressor of ras 2 (1032 aa).

The SAM domain maps to Trp11–Leu76. At Ser12 the chain carries Phosphoserine. In terms of domain architecture, CRIC spans Asn84–Tyr178. In terms of domain architecture, PDZ spans Val215–Pro297. One can recognise a DUF1170 domain in the interval Thr302–Leu515. Low complexity predominate over residues Arg324 to Pro340. A disordered region spans residues Arg324–Gln349. Residues Ser338 and Ser390 each carry the phosphoserine modification. Disordered regions lie at residues Glu480–Tyr509 and Phe538–Lys558. Over residues His545–Lys558 the composition is skewed to basic residues. In terms of domain architecture, PH spans Arg570 to Ala669. The disordered stretch occupies residues Asp682 to Arg766. Tyr683 carries the phosphotyrosine modification. A compositionally biased stretch (acidic residues) spans Tyr683–Asp693. Residues Ser685 and Ser687 each carry the phosphoserine modification. Pro residues predominate over residues Asp701–Pro714. Residues Leu730–Ser740 show a composition bias toward low complexity. Residues Ser756 and Ser767 each carry the phosphoserine modification. Positions Ala864 to Glu900 are disordered. The stretch at Pro874–Ala917 forms a coiled coil. A compositionally biased stretch (acidic residues) spans Glu875–Ala888. Ser906 carries the post-translational modification Phosphoserine.

The protein belongs to the CNKSR family. In terms of assembly, interacts with RAF1, RAB2L and RAL GTPase proteins. In terms of processing, phosphorylated on tyrosine.

It is found in the cytoplasm. The protein localises to the membrane. In terms of biological role, may function as an adapter protein or regulator of Ras signaling pathways. This chain is Connector enhancer of kinase suppressor of ras 2 (Cnksr2), found in Mus musculus (Mouse).